The sequence spans 290 residues: Pyridoxal kinase PdxY (290 aa).

Residues S12 and 47–48 (TQ) contribute to the substrate site. ATP is bound by residues D114, E151, K184, and 211 to 214 (RPLL). D225 contacts substrate.

This sequence belongs to the pyridoxine kinase family. PdxY subfamily. In terms of assembly, homodimer. Mg(2+) serves as cofactor.

The catalysed reaction is pyridoxal + ATP = pyridoxal 5'-phosphate + ADP + H(+). It functions in the pathway cofactor metabolism; pyridoxal 5'-phosphate salvage; pyridoxal 5'-phosphate from pyridoxal: step 1/1. Functionally, pyridoxal kinase involved in the salvage pathway of pyridoxal 5'-phosphate (PLP). Catalyzes the phosphorylation of pyridoxal to PLP. This Pseudomonas fluorescens (strain Pf0-1) protein is Pyridoxal kinase PdxY.